A 163-amino-acid polypeptide reads, in one-letter code: SsrA-binding protein (163 aa).

This sequence belongs to the SmpB family.

The protein resides in the cytoplasm. In terms of biological role, required for rescue of stalled ribosomes mediated by trans-translation. Binds to transfer-messenger RNA (tmRNA), required for stable association of tmRNA with ribosomes. tmRNA and SmpB together mimic tRNA shape, replacing the anticodon stem-loop with SmpB. tmRNA is encoded by the ssrA gene; the 2 termini fold to resemble tRNA(Ala) and it encodes a 'tag peptide', a short internal open reading frame. During trans-translation Ala-aminoacylated tmRNA acts like a tRNA, entering the A-site of stalled ribosomes, displacing the stalled mRNA. The ribosome then switches to translate the ORF on the tmRNA; the nascent peptide is terminated with the 'tag peptide' encoded by the tmRNA and targeted for degradation. The ribosome is freed to recommence translation, which seems to be the essential function of trans-translation. The sequence is that of SsrA-binding protein from Shewanella sp. (strain ANA-3).